A 325-amino-acid polypeptide reads, in one-letter code: Holliday junction branch migration complex subunit RuvB (325 aa).

The large ATPase domain (RuvB-L) stretch occupies residues 1–180 (MKNQLLDAKV…FGIHLKLNFY (180 aa)). ATP-binding positions include Leu-19, Arg-20, Gly-61, Lys-64, Thr-65, Ser-66, 127–129 (EDF), Arg-170, Tyr-180, and Arg-217. Thr-65 serves as a coordination point for Mg(2+). A small ATPAse domain (RuvB-S) region spans residues 181–251 (SCEELTQIVE…ITDYALNQLG (71 aa)). The interval 254-325 (KLGLDSSDHK…ITANALKHLH (72 aa)) is head domain (RuvB-H). DNA is bound by residues Arg-290, Arg-309, and Arg-314.

The protein belongs to the RuvB family. Homohexamer. Forms an RuvA(8)-RuvB(12)-Holliday junction (HJ) complex. HJ DNA is sandwiched between 2 RuvA tetramers; dsDNA enters through RuvA and exits via RuvB. An RuvB hexamer assembles on each DNA strand where it exits the tetramer. Each RuvB hexamer is contacted by two RuvA subunits (via domain III) on 2 adjacent RuvB subunits; this complex drives branch migration. In the full resolvosome a probable DNA-RuvA(4)-RuvB(12)-RuvC(2) complex forms which resolves the HJ.

The protein resides in the cytoplasm. The catalysed reaction is ATP + H2O = ADP + phosphate + H(+). In terms of biological role, the RuvA-RuvB-RuvC complex processes Holliday junction (HJ) DNA during genetic recombination and DNA repair, while the RuvA-RuvB complex plays an important role in the rescue of blocked DNA replication forks via replication fork reversal (RFR). RuvA specifically binds to HJ cruciform DNA, conferring on it an open structure. The RuvB hexamer acts as an ATP-dependent pump, pulling dsDNA into and through the RuvAB complex. RuvB forms 2 homohexamers on either side of HJ DNA bound by 1 or 2 RuvA tetramers; 4 subunits per hexamer contact DNA at a time. Coordinated motions by a converter formed by DNA-disengaged RuvB subunits stimulates ATP hydrolysis and nucleotide exchange. Immobilization of the converter enables RuvB to convert the ATP-contained energy into a lever motion, pulling 2 nucleotides of DNA out of the RuvA tetramer per ATP hydrolyzed, thus driving DNA branch migration. The RuvB motors rotate together with the DNA substrate, which together with the progressing nucleotide cycle form the mechanistic basis for DNA recombination by continuous HJ branch migration. Branch migration allows RuvC to scan DNA until it finds its consensus sequence, where it cleaves and resolves cruciform DNA. The protein is Holliday junction branch migration complex subunit RuvB of Orientia tsutsugamushi (strain Boryong) (Rickettsia tsutsugamushi).